The sequence spans 427 residues: Enolase (427 aa).

Residue Gln163 coordinates (2R)-2-phosphoglycerate. The active-site Proton donor is Glu205. Mg(2+)-binding residues include Asp242, Glu285, and Asp312. The (2R)-2-phosphoglycerate site is built by Lys337, Arg366, Ser367, and Lys388. Lys337 functions as the Proton acceptor in the catalytic mechanism.

It belongs to the enolase family. Mg(2+) serves as cofactor.

Its subcellular location is the cytoplasm. It is found in the secreted. The protein localises to the cell surface. The catalysed reaction is (2R)-2-phosphoglycerate = phosphoenolpyruvate + H2O. The protein operates within carbohydrate degradation; glycolysis; pyruvate from D-glyceraldehyde 3-phosphate: step 4/5. Functionally, catalyzes the reversible conversion of 2-phosphoglycerate (2-PG) into phosphoenolpyruvate (PEP). It is essential for the degradation of carbohydrates via glycolysis. This chain is Enolase, found in Burkholderia vietnamiensis (strain G4 / LMG 22486) (Burkholderia cepacia (strain R1808)).